A 908-amino-acid polypeptide reads, in one-letter code: Low affinity vacuolar monovalent cation/H(+) antiporter (908 aa).

Residues 1–15 (MAKNNHISASGNSTS) show a composition bias toward polar residues. Residues 1–20 (MAKNNHISASGNSTSGDHRL) are disordered. The Cytoplasmic portion of the chain corresponds to 1–244 (MAKNNHISAS…WEVTCSNVLW (244 aa)). Residue T26 is modified to Phosphothreonine. S32 bears the Phosphoserine mark. T33 is subject to Phosphothreonine. A disordered region spans residues 68-147 (NKSKRSVSSQ…DDEDANDDSR (80 aa)). The span at 73–87 (SVSSQSPIVHSSNNT) shows a compositional bias: low complexity. Residues 102–121 (ESLSSKSHSVPDLNTATPSS) show a composition bias toward polar residues. At S110 the chain carries Phosphoserine. T118 carries the post-translational modification Phosphothreonine. Position 121 is a phosphoserine (S121). Residues 245–265 (FILFGFPIAILFYSAAIVVFL) traverse the membrane as a helical segment. Topologically, residues 266–408 (LGGGGLVTNS…GRVLFYTIFH (143 aa)) are vacuolar. N361 carries N-linked (GlcNAc...) asparagine glycosylation. Residues 409-429 (LVLQPILAVLSLCLWLLVFTI) form a helical membrane-spanning segment. The Cytoplasmic portion of the chain corresponds to 430 to 494 (PMSNVLWQIM…HYYKYTVDGT (65 aa)). The chain crosses the membrane as a helical span at residues 495-515 (NVIVVNLISIVFFTIFDFYVL). Over 516-530 (KNFLHWKTWFTYESS) the chain is Vacuolar. A helical membrane pass occupies residues 531-551 (IFILCLTSTIPLAFYIGQAVA). At 552–560 (SISAQTSMG) the chain is on the cytoplasmic side. Residues 561 to 581 (VGAVINAFFSTIVEIFLYCVA) traverse the membrane as a helical segment. Residues 582 to 587 (LQQKKG) are Vacuolar-facing. Residues 588 to 608 (LLVEGSMIGSILGAVLLLPGL) traverse the membrane as a helical segment. The Cytoplasmic portion of the chain corresponds to 609–626 (SMCGGALNRKTQRYNPAS). A helical transmembrane segment spans residues 627 to 647 (AGVSSALLIFSMIVMFVPTVL). Residues 648–686 (YEIYGGYSVNCADGANDRDCTFSHPPLKFNRLFTHVIQP) are Vacuolar-facing. A helical transmembrane segment spans residues 687 to 707 (MSISCAIVLFCAYIIGLWFTL). Over 708–746 (RTHAKMIWQLPIADPTSTAPEQQEQNSHDAPNWSRSKST) the chain is Cytoplasmic. The helical transmembrane segment at 747–767 (CILLMSTLLYAIIAEILVSCV) threads the bilayer. Residues 768–783 (DAVLEDIPSLNPKFLG) lie on the Vacuolar side of the membrane. Residues 784–804 (LTIFALIPNTTEFLNAISFAI) traverse the membrane as a helical segment. Residues 805–816 (HGNVALSMEIGS) are Cytoplasmic-facing. The helical transmembrane segment at 817-837 (AYALQVCLLQIPSLVIYSIFY) threads the bilayer. Topologically, residues 838-851 (TWNVKKSMINIRTQ) are vacuolar. A helical transmembrane segment spans residues 852-872 (MFPLVFPRWDIFGAMTSVFMF). Topologically, residues 873–885 (TYLYAEGKSNYFK) are cytoplasmic. The helical transmembrane segment at 886-906 (GSMLILLYIIIVVGFYFQGAL) threads the bilayer. At 907-908 (SE) the chain is on the vacuolar side.

The protein belongs to the Ca(2+):cation antiporter (CaCA) (TC 2.A.19) family.

It localises to the vacuole membrane. Functionally, has a role in promoting intracellular monovalent cation sequestration via the exchange of monovalent cations and especially Na(+) for hydrogen ions across the vacuolar membrane. This Saccharomyces cerevisiae (strain ATCC 204508 / S288c) (Baker's yeast) protein is Low affinity vacuolar monovalent cation/H(+) antiporter (VNX1).